A 92-amino-acid chain; its full sequence is Small ribosomal subunit protein uS19 (92 aa).

The protein belongs to the universal ribosomal protein uS19 family.

Functionally, protein S19 forms a complex with S13 that binds strongly to the 16S ribosomal RNA. The chain is Small ribosomal subunit protein uS19 from Polaromonas naphthalenivorans (strain CJ2).